The chain runs to 128 residues: 14 kDa zinc-binding protein (128 aa).

One can recognise an HIT domain in the interval 18–128 (IFDKIIKKEI…GGRQMNWPPG (111 aa)). A Histidine triad motif motif is present at residues 112–116 (HIHVH).

Homodimer.

The protein is 14 kDa zinc-binding protein (ZBP14) of Zea mays (Maize).